The chain runs to 259 residues: Proliferating cell nuclear antigen (259 aa).

Residues 61-80 mediate DNA binding; the sequence is RCDRNIALGVNLTSLTKVLR. Lys-164 participates in a covalent cross-link: Glycyl lysine isopeptide (Lys-Gly) (interchain with G-Cter in SUMO); alternate. Residue Lys-164 forms a Glycyl lysine isopeptide (Lys-Gly) (interchain with G-Cter in ubiquitin); alternate linkage.

This sequence belongs to the PCNA family. As to quaternary structure, homotrimer. Monoubiquitinated on Lys-164 upon DNA damage, and then polyubiquitinated through 'Lys-63'-linkage.

The protein localises to the nucleus. This protein is an auxiliary protein of DNA polymerase delta and is involved in the control of eukaryotic DNA replication by increasing the polymerase's processibility during elongation of the leading strand. Involved in DNA repair. In Chaetomium thermophilum (strain DSM 1495 / CBS 144.50 / IMI 039719) (Thermochaetoides thermophila), this protein is Proliferating cell nuclear antigen.